Reading from the N-terminus, the 169-residue chain is Myosin regulatory light chain 11 (169 aa).

A N,N,N-trimethylalanine modification is found at Ala-2. Ser-15 and Ser-16 each carry phosphoserine. A phosphothreonine mark is found at Thr-25 and Thr-35. The region spanning 25–60 (TQIQEFKEAFTVIDQNRDGIIDKEDLRDTFAAMGRL) is the EF-hand 1 domain. 4 residues coordinate Ca(2+): Asp-38, Asn-40, Asp-42, and Asp-49. The residue at position 75 (Ser-75) is a Phosphoserine. 2 EF-hand domains span residues 95–130 (DPED…QCDR) and 131–166 (FSQE…GDAK). Thr-101 carries the post-translational modification Phosphothreonine.

As to quaternary structure, myosin is a hexamer of 2 heavy chains and 4 light chains.

Its function is as follows. Myosin regulatory subunit that plays an essential role to maintain muscle integrity during early development. Plays a role in regulation of muscle contraction. This chain is Myosin regulatory light chain 11 (Myl11), found in Mus musculus (Mouse).